A 233-amino-acid chain; its full sequence is 3-dehydroquinate dehydratase (233 aa).

Residues 39-41 (EIR) and R73 contribute to the 3-dehydroquinate site. H132 acts as the Proton donor/acceptor in catalysis. Catalysis depends on K159, which acts as the Schiff-base intermediate with substrate. The 3-dehydroquinate site is built by R196 and Q219.

Belongs to the type-I 3-dehydroquinase family. In terms of assembly, homodimer.

It catalyses the reaction 3-dehydroquinate = 3-dehydroshikimate + H2O. It functions in the pathway metabolic intermediate biosynthesis; chorismate biosynthesis; chorismate from D-erythrose 4-phosphate and phosphoenolpyruvate: step 3/7. In terms of biological role, involved in the third step of the chorismate pathway, which leads to the biosynthesis of aromatic amino acids. Catalyzes the cis-dehydration of 3-dehydroquinate (DHQ) and introduces the first double bond of the aromatic ring to yield 3-dehydroshikimate. The chain is 3-dehydroquinate dehydratase from Methanococcoides burtonii (strain DSM 6242 / NBRC 107633 / OCM 468 / ACE-M).